The following is a 148-amino-acid chain: UPF0178 protein SUN_1096 (148 aa).

Belongs to the UPF0178 family.

This Sulfurovum sp. (strain NBC37-1) protein is UPF0178 protein SUN_1096.